The primary structure comprises 120 residues: Cytochrome c-550 (120 aa).

A helical transmembrane segment spans residues 5 to 25; that stretch reads PLIPFLLIAVLGIGLTFFLSV. Over 26–120 the chain is Periplasmic; it reads KGLDDSREIA…DMAEWVSKIK (95 aa). Residues Cys-60, Cys-63, His-64, and Met-99 each coordinate heme c.

Post-translationally, binds 1 heme c group covalently per subunit.

Its subcellular location is the cell membrane. Not essential for growth on minimal or rich media. This is Cytochrome c-550 (cccA) from Bacillus subtilis (strain 168).